We begin with the raw amino-acid sequence, 2856 residues long: Lipopolysaccharide-responsive and beige-like anchor protein (2856 aa).

2 disordered regions span residues M1 to L35 and E939 to Y1107. A2 carries the N-acetylalanine modification. Phosphoserine occurs at positions 10, 979, and 1003. Residues E991–L1009 are compositionally biased toward polar residues. Over residues Q1010 to Q1026 the composition is skewed to basic and acidic residues. Low complexity predominate over residues S1073–P1082. 8 positions are modified to phosphoserine: S1097, S1132, S1136, S1219, S1221, S1228, S1244, and S1258. The interval F1253–S1296 is disordered. A compositionally biased stretch (polar residues) spans S1274 to G1283. One copy of the WD 1 repeat lies at S1298 to D1340. A phosphoserine mark is found at S1487 and S1497. Residues A1529 to V1545 form a helical membrane-spanning segment. Disordered regions lie at residues D1556–G1621 and S1750–C1778. Over residues L1563 to A1573 the composition is skewed to polar residues. The span at S1586–S1601 shows a compositional bias: low complexity. A phosphoserine mark is found at S1608, S1770, S1773, and S2057. The region spanning N2066 to P2174 is the BEACH-type PH domain. Residues A2193–R2482 form the BEACH domain. S2489 bears the Phosphoserine mark. WD repeat units follow at residues D2584–V2626, G2629–G2672, G2688–E2728, E2770–A2809, and G2812–E2851.

As to quaternary structure, interacts with TOM1 and TOLLIP. As to expression, isoform 1 is expressed in the brain, is absent from the lung and the bone marrow and is less abundant in the spleen. Isoform 2 is expressed in the spleen, lung, brain and bone marrow. Isoform 3 is expressed in the brain, is absent from the bone marrow and is less abundant in the spleen and lung.

The protein resides in the cell membrane. It is found in the endoplasmic reticulum membrane. It localises to the golgi apparatus. The protein localises to the trans-Golgi network membrane. Its subcellular location is the lysosome membrane. In terms of biological role, involved in coupling signal transduction and vesicle trafficking to enable polarized secretion and/or membrane deposition of immune effector molecules. Involved in phagophore growth during mitophagy by regulating ATG9A trafficking to mitochondria. The protein is Lipopolysaccharide-responsive and beige-like anchor protein (Lrba) of Mus musculus (Mouse).